The sequence spans 1502 residues: G patch domain-containing protein 8 (1502 aa).

Positions Ser-40–Met-86 constitute a G-patch domain. A coiled-coil region spans residues Asp-89–Ala-124. The segment at Phe-136–His-160 adopts a C2H2-type zinc-finger fold. The tract at residues Arg-172–Ser-251 is disordered. Residues Ser-182–Ala-206 are compositionally biased toward basic and acidic residues. Residues Val-223–Asp-233 show a composition bias toward acidic residues. Lys-311 participates in a covalent cross-link: Glycyl lysine isopeptide (Lys-Gly) (interchain with G-Cter in SUMO2). Basic and acidic residues-rich tracts occupy residues Ala-323–Ser-339 and Asn-424–Lys-436. Disordered regions lie at residues Ala-323 to Pro-391 and Gln-419 to Leu-541. Polar residues predominate over residues Ser-459–Glu-472. Lys-479 is subject to N6-acetyllysine. A Phosphoserine modification is found at Ser-491. Positions Ser-491–Ala-519 are enriched in polar residues. Residue Lys-577 forms a Glycyl lysine isopeptide (Lys-Gly) (interchain with G-Cter in SUMO2) linkage. Composition is skewed to basic and acidic residues over residues Ser-579–Val-623 and Ser-653–Gly-670. Residues Ser-579 to Ser-1301 are disordered. Residue Ser-653 is modified to Phosphoserine. A compositionally biased stretch (basic residues) spans Lys-671–Lys-692. The span at Ala-693–Lys-707 shows a compositional bias: basic and acidic residues. Residues Ser-708–Lys-720 are compositionally biased toward basic residues. Positions Pro-733–Pro-743 are enriched in pro residues. A phosphoserine mark is found at Ser-738, Ser-740, and Ser-758. The segment covering Ala-750 to Gly-772 has biased composition (basic and acidic residues). Composition is skewed to basic residues over residues Ala-799–His-809 and Ser-852–Arg-867. Low complexity predominate over residues Arg-868–Asp-896. Residues Ser-911 and Ser-914 each carry the phosphoserine modification. Residues Ser-919 to Tyr-928 are compositionally biased toward basic residues. 5 positions are modified to phosphoserine: Ser-981, Ser-1009, Ser-1014, Ser-1033, and Ser-1035. Over residues Trp-1010–Arg-1027 the composition is skewed to basic and acidic residues. The span at Gly-1042–Lys-1059 shows a compositional bias: basic and acidic residues. Ser-1081 bears the Phosphoserine mark. 2 stretches are compositionally biased toward basic and acidic residues: residues Leu-1093–Val-1108 and Lys-1159–Glu-1171. A Glycyl lysine isopeptide (Lys-Gly) (interchain with G-Cter in SUMO2) cross-link involves residue Lys-1105. Ser-1107 is subject to Phosphoserine. Residue Ser-1175 is modified to Phosphoserine.

This chain is G patch domain-containing protein 8 (GPATCH8), found in Homo sapiens (Human).